The primary structure comprises 371 residues: MSTNNSDIRVVVGMSGGVDSSVTAHILKEQGYDVIGIFMKNWDDTDEFGVCTATEDYDDVIRVANQIGIPYYAVNFEKEYWDKVFTYFLDEYKLGRTPNPDVMCNKEIKFKAFLEHAESLGADFVATGHYAQVKKVGDEIELLRGVDNNKDQTYFLNQLSQDQLKKVMFPLGAMEKTEVREIAKKAGLATANKKDSTGICFIGERNFKQFLSEYLPAQPGEMRTLNGEVLGKHDGLMYYTIGQRHGLGIGGDGEPWFVVGKDLKENVLFVEQGFHHETLYSDSLIATDISFTTNAAKPKTIECTAKFRYRQTDTKVTVHLREDGTAEVVFADPVRAITPGQAVVFYDGDICLGGGTIDTVWKNGAKLNYVG.

Residues 13 to 20 (GMSGGVDS) and Met-39 each bind ATP. The interval 99-101 (NPD) is interaction with target base in tRNA. The active-site Nucleophile is the Cys-104. Cys-104 and Cys-200 are joined by a disulfide. Gly-128 serves as a coordination point for ATP. The interval 150-152 (KDQ) is interaction with tRNA. Cys-200 functions as the Cysteine persulfide intermediate in the catalytic mechanism. The interaction with tRNA stretch occupies residues 308–309 (RY).

The protein belongs to the MnmA/TRMU family.

The protein resides in the cytoplasm. The catalysed reaction is S-sulfanyl-L-cysteinyl-[protein] + uridine(34) in tRNA + AH2 + ATP = 2-thiouridine(34) in tRNA + L-cysteinyl-[protein] + A + AMP + diphosphate + H(+). In terms of biological role, catalyzes the 2-thiolation of uridine at the wobble position (U34) of tRNA, leading to the formation of s(2)U34. In Listeria monocytogenes serotype 4a (strain HCC23), this protein is tRNA-specific 2-thiouridylase MnmA.